The sequence spans 300 residues: F-box protein PP2-A15 (300 aa).

Positions 17–63 constitute an F-box domain; that stretch reads MGPGLGDIPESCVACVFMYLTPPEICNLAGLNRSFRGAASSDSVWEK.

In Arabidopsis thaliana (Mouse-ear cress), this protein is F-box protein PP2-A15 (PP2A15).